The following is a 481-amino-acid chain: NADH-quinone oxidoreductase subunit N (481 aa).

The next 14 helical transmembrane spans lie at 11–31, 38–58, 69–89, 107–127, 128–148, 162–182, 203–223, 237–257, 271–291, 299–319, 327–347, 370–390, 401–421, and 457–477; these read AIPEIWVLTMACVVLLADLFW, LAAVLTVLTLSGAAVLTVFEM, FVLDRFTNVAELFSYLAVLMV, VFVLLLFALLGIMVMVSGGSL, LSVYLGLELLALSQYALVAFY, FVLGALASGLLLYGMSLLYGL, LVLVFAIVFIAAGIAFKLGAA, PTVVTAFLASAPKIGAFALII, WQQIFVALTVVSLVVGNVIAI, MLAYSTIGHVGFMLLGIVAGT, FFYTVVYTLMSLAGFGMILLV, YAFLMMIVMFSMAGVPPTVGF, VAAGYVWLAVVGVLLAVIGAF, and LALLVLGILPGPLMAFCFYAM.

It belongs to the complex I subunit 2 family. As to quaternary structure, NDH-1 is composed of 14 different subunits. Subunits NuoA, H, J, K, L, M, N constitute the membrane sector of the complex.

The protein localises to the cell inner membrane. The enzyme catalyses a quinone + NADH + 5 H(+)(in) = a quinol + NAD(+) + 4 H(+)(out). Its function is as follows. NDH-1 shuttles electrons from NADH, via FMN and iron-sulfur (Fe-S) centers, to quinones in the respiratory chain. The immediate electron acceptor for the enzyme in this species is believed to be ubiquinone. Couples the redox reaction to proton translocation (for every two electrons transferred, four hydrogen ions are translocated across the cytoplasmic membrane), and thus conserves the redox energy in a proton gradient. This chain is NADH-quinone oxidoreductase subunit N, found in Acidithiobacillus ferrooxidans (strain ATCC 23270 / DSM 14882 / CIP 104768 / NCIMB 8455) (Ferrobacillus ferrooxidans (strain ATCC 23270)).